The primary structure comprises 407 residues: Accessory Sec system protein translocase subunit SecY2 (407 aa).

10 consecutive transmembrane segments (helical) span residues 22–42, 68–88, 108–128, 136–156, 169–189, 191–211, 245–265, 280–300, 343–363, and 366–386; these read IAFT…TIVD, LNVF…ISLI, EKFL…NQFV, FTEL…MWLA, PIVL…IVSI, ILML…LLLT, ISIM…NLIF, FGHY…GYLL, WFGT…SLLV, and LSEY…AMNI.

Belongs to the SecY/SEC61-alpha family. SecY2 subfamily. Component of the accessory SecA2/SecY2 protein translocase complex required to export cell wall proteins. May form heterotrimers with SecE and SecG subunits.

The protein localises to the cell membrane. Part of the accessory SecA2/SecY2 system specifically required for export of possible cell wall proteins. The central subunit of a protein translocation channel. In Staphylococcus pseudintermedius (strain ED99), this protein is Accessory Sec system protein translocase subunit SecY2.